Reading from the N-terminus, the 466-residue chain is Communesin N16 acyltransferase cnsK (466 aa).

It belongs to the fumigaclavine B O-acetyltransferase family.

Its pathway is alkaloid biosynthesis. Communesin N16 acyltransferase; part of the gene cluster that mediates the biosynthesis of communesins, a prominent class of indole alkaloids with great potential as pharmaceuticals. Communesins are biosynthesized by the coupling of tryptamine and aurantioclavine, two building blocks derived from L-tryptophan. The L-tryptophan decarboxylase cnsB converts L-tryptophan to tryptamine, whereas the tryptophan dimethylallyltransferase cnsF converts L-tryptophan to 4-dimethylallyl tryptophan which is further transformed to aurantioclavine by the aurantioclavine synthase cnsA, probably aided by the catalase cnsD. The cytochrome P450 monooxygenase cnsC catalyzes the heterodimeric coupling between the two different indole moieties, tryptamine and aurantioclavine, to construct vicinal quaternary stereocenters and yield the heptacyclic communesin scaffold. The O-methyltransferase cnsE then methylates the communesin scaffold to produce communesin K, the simplest characterized communesin that contains the heptacyclic core. The dioxygenase cnsJ converts communesin K into communesin I. Acylation to introduce the hexadienyl group at position N16 of communesin I by the acyltransferase cnsK leads to the production of communesin B. The hexadienyl group is produced by the highly reducing polyketide synthase cnsI, before being hydrolytically removed from cnsI by the serine hydrolase cnsH, converted into hexadienyl-CoA by the CoA ligase cnsG, and then transferred to communesin I by cnsK. Surprisingly, cnsK may also be a promiscuous acyltransferase that can tolerate a range of acyl groups, including acetyl-, propionyl-, and butyryl-CoA, which lead to communesins A, G and H respectively. The roles of the alpha-ketoglutarate-dependent dioxygenases cnsM and cnsP have still to be determined. The chain is Communesin N16 acyltransferase cnsK from Penicillium expansum (Blue mold rot fungus).